The following is a 284-amino-acid chain: Ubiquinone biosynthesis protein COQ4, mitochondrial (284 aa).

Residues His-165, Asp-166, His-169, and Glu-181 each coordinate Zn(2+).

Belongs to the COQ4 family. In terms of assembly, component of a multi-subunit COQ enzyme complex, composed of at least COQ3, COQ4, COQ5, COQ6, COQ7 and COQ9. It depends on Zn(2+) as a cofactor.

The protein resides in the mitochondrion inner membrane. The enzyme catalyses a 4-hydroxy-3-methoxy-5-(all-trans-polyprenyl)benzoate + H(+) = a 2-methoxy-6-(all-trans-polyprenyl)phenol + CO2. Its pathway is cofactor biosynthesis; ubiquinone biosynthesis. Functionally, lyase that catalyzes the C1-decarboxylation of 4-hydroxy-3-methoxy-5-(all-trans-polyprenyl)benzoic acid into 2-methoxy-6-(all-trans-polyprenyl)phenol during ubiquinone biosynthesis. The polypeptide is Ubiquinone biosynthesis protein COQ4, mitochondrial (Blastomyces gilchristii (strain SLH14081) (Blastomyces dermatitidis)).